We begin with the raw amino-acid sequence, 185 residues long: Elongation factor P (185 aa).

The protein belongs to the elongation factor P family.

It localises to the cytoplasm. It functions in the pathway protein biosynthesis; polypeptide chain elongation. Its function is as follows. Involved in peptide bond synthesis. Stimulates efficient translation and peptide-bond synthesis on native or reconstituted 70S ribosomes in vitro. Probably functions indirectly by altering the affinity of the ribosome for aminoacyl-tRNA, thus increasing their reactivity as acceptors for peptidyl transferase. In Mesoplasma florum (strain ATCC 33453 / NBRC 100688 / NCTC 11704 / L1) (Acholeplasma florum), this protein is Elongation factor P.